The sequence spans 488 residues: Pre-glycoprotein polyprotein GP complex (488 aa).

A lipid anchor (N-myristoyl glycine; by host) is attached at glycine 2. The Extracellular segment spans residues 2 to 17; that stretch reads GQLFSFFEEVPNIIHE. A helical transmembrane segment spans residues 18-32; that stretch reads AINIALIAVSLIAAL. A topological domain (cytoplasmic) is located at residue lysine 33. The chain crosses the membrane as a helical span at residues 34–53; sequence GMINLWKSGLFQLIFFLTLA. Extracellular loops occupy residues 54–58 and 59–427; these read GRSCS and FRIG…TLVD. Cysteine 57 is a Zn(2+) binding site. N-linked (GlcNAc...) asparagine; by host glycosylation is found at asparagine 69, asparagine 88, asparagine 99, asparagine 125, asparagine 171, asparagine 178, and asparagine 222. 4 cysteine pairs are disulfide-bonded: cysteine 85-cysteine 229, cysteine 274-cysteine 287, cysteine 296-cysteine 305, and cysteine 359-cysteine 380. N-linked (GlcNAc...) asparagine; by host glycans are attached at residues asparagine 360, asparagine 368, asparagine 385, and asparagine 390. The chain crosses the membrane as a helical span at residues 428 to 448; it reads ICFWSTLFFTTTLFLHLVGFP. At 449–488 the chain is on the cytoplasmic side; sequence THRHIRGEPCPLPHRLNSRGGCRCGKYPELKKPITWHKNH. Histidine 450, histidine 452, cysteine 458, histidine 462, cysteine 470, cysteine 472, and histidine 488 together coordinate Zn(2+).

The protein belongs to the arenaviridae GPC protein family. Homotetramer; disulfide-linked. In terms of assembly, homotetramer. GP2 homotetramers bind through ionic interactions with GP1 homotetramers to form the GP complex together with the stable signal peptide. The GP-C polyprotein interacts with the host protease MBTPS1/SKI-1 resulting in the polyprotein processing. Post-translationally, specific enzymatic cleavages in vivo yield mature proteins. GP-C polyprotein is cleaved in the endoplasmic reticulum by the host protease MBTPS1. Only cleaved glycoprotein is incorporated into virions. In terms of processing, the SSP remains stably associated with the GP complex following cleavage by signal peptidase and plays crucial roles in the trafficking of GP through the secretory pathway. Myristoylation is necessary for GP2-mediated fusion activity.

It localises to the virion membrane. Its subcellular location is the host endoplasmic reticulum membrane. The protein resides in the host Golgi apparatus membrane. It is found in the host cell membrane. In terms of biological role, interacts with the host receptor. Mediates virus attachment to host TFRC. This attachment induces virion internalization predominantly through clathrin-mediated endocytosis. Its function is as follows. Class I viral fusion protein that directs fusion of viral and host endosomal membranes, leading to delivery of the nucleocapsid into the cytoplasm. Membrane fusion is mediated by irreversible conformational changes induced upon acidification in the endosome. Stable signal peptide (SSP): cleaved and functions as a signal peptide. In addition, it is also retained as the third component of the GP complex. The SSP is required for efficient glycoprotein expression, post-translational maturation cleavage of GP1 and GP2, glycoprotein transport to the cell surface plasma membrane, formation of infectious virus particles, and acid pH-dependent glycoprotein-mediated cell fusion. This chain is Pre-glycoprotein polyprotein GP complex, found in Homo sapiens (Human).